Consider the following 150-residue polypeptide: SsrA-binding protein (150 aa).

A disordered region spans residues 130-150; it reads DKRESLKEKDDRREMDRMFKR.

It belongs to the SmpB family.

Its subcellular location is the cytoplasm. Its function is as follows. Required for rescue of stalled ribosomes mediated by trans-translation. Binds to transfer-messenger RNA (tmRNA), required for stable association of tmRNA with ribosomes. tmRNA and SmpB together mimic tRNA shape, replacing the anticodon stem-loop with SmpB. tmRNA is encoded by the ssrA gene; the 2 termini fold to resemble tRNA(Ala) and it encodes a 'tag peptide', a short internal open reading frame. During trans-translation Ala-aminoacylated tmRNA acts like a tRNA, entering the A-site of stalled ribosomes, displacing the stalled mRNA. The ribosome then switches to translate the ORF on the tmRNA; the nascent peptide is terminated with the 'tag peptide' encoded by the tmRNA and targeted for degradation. The ribosome is freed to recommence translation, which seems to be the essential function of trans-translation. The sequence is that of SsrA-binding protein from Phocaeicola vulgatus (strain ATCC 8482 / DSM 1447 / JCM 5826 / CCUG 4940 / NBRC 14291 / NCTC 11154) (Bacteroides vulgatus).